A 307-amino-acid chain; its full sequence is D-alanine--D-alanine ligase (307 aa).

One can recognise an ATP-grasp domain in the interval 105–304 (KMLWKGFGLP…FEKLVEKILE (200 aa)). 135-190 (VARLGLPLMVKPSREGSSVGLTKVDSADKLKSAVDLALKFDDIVLIEEWLSGDELT) is an ATP binding site. Residues D258, E271, and N273 each coordinate Mg(2+).

The protein belongs to the D-alanine--D-alanine ligase family. It depends on Mg(2+) as a cofactor. Mn(2+) is required as a cofactor.

The protein resides in the cytoplasm. It catalyses the reaction 2 D-alanine + ATP = D-alanyl-D-alanine + ADP + phosphate + H(+). It participates in cell wall biogenesis; peptidoglycan biosynthesis. Functionally, cell wall formation. This Actinobacillus succinogenes (strain ATCC 55618 / DSM 22257 / CCUG 43843 / 130Z) protein is D-alanine--D-alanine ligase.